The sequence spans 295 residues: Indole-3-glycerol phosphate synthase (295 aa).

This sequence belongs to the TrpC family.

It catalyses the reaction 1-(2-carboxyphenylamino)-1-deoxy-D-ribulose 5-phosphate + H(+) = (1S,2R)-1-C-(indol-3-yl)glycerol 3-phosphate + CO2 + H2O. Its pathway is amino-acid biosynthesis; L-tryptophan biosynthesis; L-tryptophan from chorismate: step 4/5. This chain is Indole-3-glycerol phosphate synthase, found in Prochlorococcus marinus (strain MIT 9301).